The following is a 204-amino-acid chain: Probable chorismate pyruvate-lyase (204 aa).

Substrate contacts are provided by arginine 78, leucine 131, and glutamate 190.

Belongs to the UbiC family.

It localises to the cytoplasm. It catalyses the reaction chorismate = 4-hydroxybenzoate + pyruvate. Its pathway is cofactor biosynthesis; ubiquinone biosynthesis. In terms of biological role, removes the pyruvyl group from chorismate, with concomitant aromatization of the ring, to provide 4-hydroxybenzoate (4HB) for the ubiquinone pathway. The sequence is that of Probable chorismate pyruvate-lyase from Shewanella frigidimarina (strain NCIMB 400).